A 342-amino-acid chain; its full sequence is Inositol-tetrakisphosphate 1-kinase 1 (342 aa).

1D-myo-inositol 6-phosphate-binding residues include Lys28 and Lys70. Positions 105 and 155 each coordinate ATP. One can recognise an ATP-grasp domain in the interval 116-332 (DHAADQDSTF…HKDGVGNQQE (217 aa)). 1D-myo-inositol 6-phosphate contacts are provided by Gly161 and His166. The ATP site is built by His166, Gln187, and Val190. Positions 198 and 200 each coordinate 1D-myo-inositol 6-phosphate. Ser213 contacts ATP. Residues 219-247 (PEDDASAQGSVSFSQVSNLPTERTAEEYY) are catalytic specificity elements (CSE). 1D-myo-inositol 6-phosphate is bound at residue Asn280. Asp282 contacts Mg(2+). ATP-binding residues include Ile296, Asp297, and Asn299. Mg(2+)-binding residues include Asp297 and Asn299. Asn299, Gly303, and Lys306 together coordinate 1D-myo-inositol 6-phosphate.

The protein belongs to the ITPK1 family. Monomer. Mg(2+) is required as a cofactor. Expressed in the embryo of 15 day after pollination. Expressed in kernels at earlier stages but at very low levels. Expression in the embryo peaks at 15 days after pollination and then declines. No expression is detected from endosperm and vegetative tissues.

The enzyme catalyses 1D-myo-inositol 3,4,5,6-tetrakisphosphate + ATP = 1D-myo-inositol 1,3,4,5,6-pentakisphosphate + ADP + H(+). It carries out the reaction 1D-myo-inositol 1,3,4-trisphosphate + ATP = 1D-myo-inositol 1,3,4,5-tetrakisphosphate + ADP + H(+). The catalysed reaction is 1D-myo-inositol 1,3,4-trisphosphate + ATP = 1D-myo-inositol 1,3,4,6-tetrakisphosphate + ADP + H(+). It catalyses the reaction 1D-myo-inositol 1,2,3,4,5-pentakisphosphate + ATP = 3-diphospho-1D-myo-inositol 1,2,4,5-tetrakisphosphate + ADP. The enzyme catalyses 1D-myo-inositol hexakisphosphate + ATP = 5-diphospho-1D-myo-inositol 1,2,3,4,6-pentakisphosphate + ADP. Functionally, kinase that can phosphorylate various inositol polyphosphate such as Ins(3,4,5,6)P4 or Ins(1,3,4)P3 and participates in phytic acid biosynthesis in developing seeds. Phosphorylates Ins(3,4,5,6)P4 at position 1 to form Ins(1,3,4,5,6)P5. This reaction is thought to have regulatory importance, since Ins(3,4,5,6)P4 is an inhibitor of plasma membrane Ca(2+)-activated Cl(-) channels, while Ins(1,3,4,5,6)P5 is not. Also phosphorylates Ins(1,3,4)P3 on O-5 and O-6 to form Ins(1,3,4,6)P4, an essential molecule in the hexakisphosphate (InsP6) pathway. Also able to phosphorylate Ins(3,5,6)P3 but not Ins(1,4,5)P3, Ins(2,4,5)P3, Ins(1,3,4,6)P4 nor Ins(1,3,5,6)P4. Has higher specific activity on Ins(3,4,5,6)P4 than Ins(1,3,4)P3 and Ins(3,5,6)P3. Can also could use Ins(1,2,5,6)P4 as a substrate. Able to add a beta-phosphate to the 3 positions of Ins(1,2,3,4,5)P5 and to add beta-phosphate to InsP6 to yield 5-InsP7, thus exhibiting InsP6 kinase activity. Also has Ins(1,3,4,5,6)P5 phosphatase activity. The chain is Inositol-tetrakisphosphate 1-kinase 1 from Zea mays (Maize).